Here is a 112-residue protein sequence, read N- to C-terminus: Truncated ankyrin repeat protein B25 (112 aa).

It belongs to the orthopoxviruses B25 protein family.

The polypeptide is Truncated ankyrin repeat protein B25 (Bos taurus (Bovine)).